The following is a 446-amino-acid chain: Probable D-serine dehydratase (446 aa).

The residue at position 116 (K116) is an N6-(pyridoxal phosphate)lysine.

It belongs to the serine/threonine dehydratase family. DsdA subfamily. Pyridoxal 5'-phosphate is required as a cofactor.

The enzyme catalyses D-serine = pyruvate + NH4(+). The polypeptide is Probable D-serine dehydratase (Bacillus thuringiensis subsp. konkukian (strain 97-27)).